Consider the following 91-residue polypeptide: Long neurotoxin OH-56 (91 aa).

Positions 1–21 (MKTLLLTLVVVTIMCLDLGYT) are cleaved as a signal peptide. Cystine bridges form between C24–C42, C35–C63, C48–C52, C67–C78, and C79–C84.

This sequence belongs to the three-finger toxin family. Long-chain subfamily. Type II alpha-neurotoxin sub-subfamily. As to expression, expressed by the venom gland.

It localises to the secreted. Functionally, binds with high affinity to muscular (alpha-1/CHRNA1) and neuronal (alpha-7/CHRNA7) nicotinic acetylcholine receptor (nAChR) and inhibits acetylcholine from binding to the receptor, thereby impairing neuromuscular and neuronal transmission. This is Long neurotoxin OH-56 from Ophiophagus hannah (King cobra).